A 417-amino-acid chain; its full sequence is MFQCLEPERNEETGPVYVRERGKLSVVGSHVSELRTRPCRLFSKGFSVELCGKQEDTSRHRQKPFIFTYTKEGSLRYSAKSLFTLTLDLITDNIHYVDSLMGFPDQIAEKLFTAAEAKHKFFTPCNGVMALRKFTEAYGDLVLSSLCLRGRYLLISERLEEIKSFQCLRSLDLSCCKLGDEHELLEHLSSDPMSSLTELYLKDNCFSDTGIRKMTASLRVLGKGLDALKVLDLSSNPGITDRGVLFLFGFKLLQFLDLSDTSIQDRSRTVKKIETKIGLVLSKKPIIQFEHRNCRTQGWAEQLLDQWENYIFSAIKPKDTLKSRKAAQQFYGKETKQNPLDSGICTLLTPVEQKQTHLQFFRPEEQKDSDSSKSDKRQRSTKRTGADPGQEDCTIAPATKRPRVTLTAADWDLLNSY.

LRR repeat units follow at residues 167–188, 195–215, 227–249, and 252–273; these read CLRSLDLSCCKLGDEHELLEHL, SLTELYLKDNCFSDTGIRKMT, ALKVLDLSSNPGITDRGVLFLFG, and LLQFLDLSDTSIQDRSRTVKKI. Positions 360–399 are disordered; it reads FFRPEEQKDSDSSKSDKRQRSTKRTGADPGQEDCTIAPAT. Positions 362 to 378 are enriched in basic and acidic residues; the sequence is RPEEQKDSDSSKSDKRQ.

It belongs to the LRRC42 family.

The polypeptide is Leucine-rich repeat-containing protein 42 (lrrc42) (Xenopus tropicalis (Western clawed frog)).